The following is a 248-amino-acid chain: Pyridoxine 5'-phosphate synthase (248 aa).

The 3-amino-2-oxopropyl phosphate site is built by Asn-8 and Arg-19. His-44 functions as the Proton acceptor in the catalytic mechanism. 1-deoxy-D-xylulose 5-phosphate-binding residues include Arg-46 and His-51. Catalysis depends on Glu-76, which acts as the Proton acceptor. Residue Thr-106 coordinates 1-deoxy-D-xylulose 5-phosphate. His-200 acts as the Proton donor in catalysis. 3-amino-2-oxopropyl phosphate is bound by residues Asp-201 and 223–224 (GH).

It belongs to the PNP synthase family. In terms of assembly, homooctamer; tetramer of dimers.

It localises to the cytoplasm. It catalyses the reaction 3-amino-2-oxopropyl phosphate + 1-deoxy-D-xylulose 5-phosphate = pyridoxine 5'-phosphate + phosphate + 2 H2O + H(+). The protein operates within cofactor biosynthesis; pyridoxine 5'-phosphate biosynthesis; pyridoxine 5'-phosphate from D-erythrose 4-phosphate: step 5/5. Functionally, catalyzes the complicated ring closure reaction between the two acyclic compounds 1-deoxy-D-xylulose-5-phosphate (DXP) and 3-amino-2-oxopropyl phosphate (1-amino-acetone-3-phosphate or AAP) to form pyridoxine 5'-phosphate (PNP) and inorganic phosphate. In Chelativorans sp. (strain BNC1), this protein is Pyridoxine 5'-phosphate synthase.